Consider the following 1160-residue polypeptide: Large proline-rich protein BAG6 (1160 aa).

The Ubiquitin-like domain maps to 7–82 (IEVTVKTLDS…HLVERPPPQS (76 aa)). Disordered regions lie at residues 76 to 114 (ERPP…YTTS), 206 to 261 (EGQS…HPSP), 367 to 422 (IPMN…GQGT), 478 to 547 (ASAG…QTNQ), 563 to 628 (GDQT…DNLA), 672 to 711 (SGQP…AETL), 962 to 1038 (SARR…AEPW), and 1126 to 1160 (YAQQ…SEDA). Residues 85-94 (PGGGGGGVSG) are compositionally biased toward gly residues. Low complexity-rich tracts occupy residues 95 to 110 (SSGA…QSSA) and 223 to 233 (SSSSFSAHPMD). Polar residues-rich tracts occupy residues 247–257 (QTEGETQSGPN) and 371–417 (LGST…QQTG). 2 stretches are compositionally biased toward low complexity: residues 478–495 (ASAG…AGAQ) and 566–614 (TSTT…STAS). A compositionally biased stretch (pro residues) spans 677-698 (FPSPNQQPPPSQATPPSAPSGP). Residues 699-708 (APTTAPSGGA) show a composition bias toward low complexity. A compositionally biased stretch (basic and acidic residues) spans 1132–1146 (SDIKKRLSDDPDYNH).

Component of the bag6/bat3 complex.

It is found in the cytoplasm. The protein resides in the cytosol. Its subcellular location is the nucleus. The protein localises to the secreted. It localises to the extracellular exosome. In terms of biological role, ATP-independent molecular chaperone preventing the aggregation of misfolded and hydrophobic patches-containing proteins. Functions as part of a cytosolic protein quality control complex, the bag6/bat3 complex, which maintains these client proteins in a soluble state and participates in their proper delivery to the endoplasmic reticulum or alternatively can promote their sorting to the proteasome where they undergo degradation. The bag6/bat3 complex is involved in the post-translational delivery of tail-anchored/type II transmembrane proteins to the endoplasmic reticulum membrane. Similarly, the bag6/bat3 complex also functions as a sorting platform for proteins of the secretory pathway that are mislocalized to the cytosol either delivering them to the proteasome for degradation or to the endoplasmic reticulum. The bag6/bat3 complex also plays a role in the endoplasmic reticulum-associated degradation (ERAD), a quality control mechanism that eliminates unwanted proteins of the endoplasmic reticulum through their retrotranslocation to the cytosol and their targeting to the proteasome. It maintains these retrotranslocated proteins in an unfolded yet soluble state condition in the cytosol to ensure their proper delivery to the proteasome. Also required for selective ubiquitin-mediated degradation of defective nascent chain polypeptides by the proteasome. Also involved in endoplasmic reticulum stress-induced pre-emptive quality control, a mechanism that selectively attenuates the translocation of newly synthesized proteins into the endoplasmic reticulum and reroutes them to the cytosol for proteasomal degradation. May ensure the proper degradation of these proteins and thereby protects the endoplasmic reticulum from protein overload upon stress. By stabilizing a large spectrum of proteins, may indirectly affect different biological processes including apoptosis. By controlling the steady-state expression of the IGF1R receptor, indirectly regulates the insulin-like growth factor receptor signaling pathway. When nuclear, may also act as a component of some chromatin regulator complex. This chain is Large proline-rich protein BAG6, found in Danio rerio (Zebrafish).